The chain runs to 213 residues: MSSLPALDLFLSKYQQAYVDQLGEQPRYYAQEQESDCVVGEMDSDGAVFWQGVVRDNPGQFENVESALELTLCPEINTFYGRHFSAPLFFDSKWGSGELIQVWNQTDFEYLQQNIIGHLMMKKKLKQEPTWFIGVLDDEDKMLTVNNADGSVWVEIPGELQSTKLAESLDEFISLLTPRVMPPVKPIEESMPELDHPGIWQRMKLMWNNLRGK.

It belongs to the Syd family.

The protein resides in the cell inner membrane. Functionally, interacts with the SecY protein in vivo. May bind preferentially to an uncomplexed state of SecY, thus functioning either as a chelating agent for excess SecY in the cell or as a regulatory factor that negatively controls the translocase function. The sequence is that of Protein Syd from Shewanella pealeana (strain ATCC 700345 / ANG-SQ1).